We begin with the raw amino-acid sequence, 88 residues long: Sec-independent protein translocase protein TatA (88 aa).

The helical transmembrane segment at 1–21 threads the bilayer; sequence MGGASIWHWIVVGVIVMLLFG. The disordered stretch occupies residues 62 to 88; the sequence is TEPVRTLPPHPTEPAPATHATVDRKVV.

The protein belongs to the TatA/E family. As to quaternary structure, the Tat system comprises two distinct complexes: a TatABC complex, containing multiple copies of TatA, TatB and TatC subunits, and a separate TatA complex, containing only TatA subunits. Substrates initially bind to the TatABC complex, which probably triggers association of the separate TatA complex to form the active translocon.

The protein resides in the cell inner membrane. Its function is as follows. Part of the twin-arginine translocation (Tat) system that transports large folded proteins containing a characteristic twin-arginine motif in their signal peptide across membranes. TatA could form the protein-conducting channel of the Tat system. The chain is Sec-independent protein translocase protein TatA from Methylobacterium sp. (strain 4-46).